We begin with the raw amino-acid sequence, 87 residues long: Putative regulatory protein BH2513 (87 aa).

Belongs to the RemA family.

This chain is Putative regulatory protein BH2513, found in Halalkalibacterium halodurans (strain ATCC BAA-125 / DSM 18197 / FERM 7344 / JCM 9153 / C-125) (Bacillus halodurans).